Consider the following 152-residue polypeptide: Transcriptional regulator MraZ (152 aa).

SpoVT-AbrB domains follow at residues 5–52 (ATLV…PLPE) and 81–124 (ASEC…DETT).

The protein belongs to the MraZ family. Forms oligomers.

It localises to the cytoplasm. Its subcellular location is the nucleoid. Negatively regulates its own expression and that of the subsequent genes in the proximal part of the division and cell wall (dcw) gene cluster. Acts by binding directly to DNA. May also regulate the expression of genes outside the dcw cluster. The polypeptide is Transcriptional regulator MraZ (Escherichia fergusonii (strain ATCC 35469 / DSM 13698 / CCUG 18766 / IAM 14443 / JCM 21226 / LMG 7866 / NBRC 102419 / NCTC 12128 / CDC 0568-73)).